Consider the following 479-residue polypeptide: Adenosylhomocysteinase (479 aa).

Positions 56, 133, and 199 each coordinate substrate. 200–202 (TTT) is a binding site for NAD(+). Substrate is bound by residues K229 and D233. Residues N234, 263 to 268 (GYGDVG), E286, N321, 342 to 344 (IGH), and N390 contribute to the NAD(+) site.

This sequence belongs to the adenosylhomocysteinase family. Homotetramer. NAD(+) serves as cofactor.

The enzyme catalyses S-adenosyl-L-homocysteine + H2O = L-homocysteine + adenosine. It functions in the pathway amino-acid biosynthesis; L-homocysteine biosynthesis; L-homocysteine from S-adenosyl-L-homocysteine: step 1/1. Adenosylhomocysteine is a competitive inhibitor of S-adenosyl-L-methionine-dependent methyl transferase reactions; therefore adenosylhomocysteinase may play a key role in the control of methylations via regulation of the intracellular concentration of adenosylhomocysteine. The sequence is that of Adenosylhomocysteinase from Plasmodium chabaudi chabaudi.